Here is a 349-residue protein sequence, read N- to C-terminus: Putative transport protein YhhT (349 aa).

At 1-10 (METPQPDKTG) the chain is on the cytoplasmic side. The chain crosses the membrane as a helical span at residues 11-31 (MHILLKLASLVVILAGIHAAA). A topological domain (periplasmic) is located at residue D32. The helical transmembrane segment at 33 to 53 (IIVQLLLALFFAIVLNPLVTW) threads the bilayer. Topologically, residues 54-62 (FIRRGVQRP) are cytoplasmic. Residues 63 to 83 (VAITIVVVVMLIALTALVGVL) form a helical membrane-spanning segment. At 84 to 142 (AASFNEFISMLPKFNKELTRKLFKLQEMLPFLNLHMSPERMLQRMDSEKVVTFTTALMT) the chain is on the periplasmic side. A helical membrane pass occupies residues 143–163 (GLSGAMASVLLLVMTVVFMLF). At 164 to 208 (EVRHVPYKMRFALNNPQIHIAGLHRALKGVSHYLALKTLLSLWTG) the chain is on the cytoplasmic side. The chain crosses the membrane as a helical span at residues 209–229 (VIVWLGLELMGVQFALMWAVL). Topologically, residues 230-234 (AFLLN) are periplasmic. Residues 235-255 (YVPNIGAVISAVPPMIQVLLF) form a helical membrane-spanning segment. The Cytoplasmic segment spans residues 256-257 (NG). Residues 258–278 (VYECILVGALFLVVHMVIGNI) traverse the membrane as a helical segment. Residues 279–292 (LEPRMMGHRLGMST) are Periplasmic-facing. A helical membrane pass occupies residues 293–313 (MVVFLSLLIWGWLLGPVGMLL). At 314–349 (SVPLTSVCKIWMETTKGGSKLAILLGPGRPKSRLPG) the chain is on the cytoplasmic side.

This sequence belongs to the autoinducer-2 exporter (AI-2E) (TC 2.A.86) family.

It localises to the cell inner membrane. This is Putative transport protein YhhT (yhhT) from Escherichia coli O157:H7.